We begin with the raw amino-acid sequence, 644 residues long: Protein SNOWY COTYLEDON 3 (644 aa).

3 disordered regions span residues 1 to 129 (MVAA…TRTE), 162 to 252 (ETAT…DGRL), and 290 to 414 (SDTD…SRVR). Residues 53–77 (SPSPSHSTTTTTTTATSTSTSSSSS) are compositionally biased toward low complexity. A compositionally biased stretch (polar residues) spans 91–112 (LSRTTNSASNLVYTPSSLPKRS). Over residues 172–190 (CTPERRRATPVRDQRENSK) the composition is skewed to basic and acidic residues. Composition is skewed to polar residues over residues 290 to 302 (SDTD…STNG) and 314 to 332 (TRSL…QETN). 2 stretches are compositionally biased toward low complexity: residues 343–370 (SPQC…SSDS) and 397–412 (ATAT…SPSR). The short motif at 463 to 466 (QWRF) is the QWRF motif element.

Belongs to the QWRF family. In terms of tissue distribution, expressed in young developing tissues, such as seedlings, roots, flowers, buds and young siliques, and to a lesser extent in mature green tissues.

Its subcellular location is the peroxisome. Probable microtubule-associated peroxisomal protein required for chloroplast biogenesis and for the formation of the prolamellar body and prothylakoids in etioplasts. Not involved in peroxisomal metabolism, including mobilization of storage compounds during germination, fatty acid beta-oxydation or photorespiration. This is Protein SNOWY COTYLEDON 3 (SCO3) from Arabidopsis thaliana (Mouse-ear cress).